The primary structure comprises 698 residues: Inner centromere protein SLI15 (698 aa).

Residue Ser-268 is modified to Phosphoserine. Disordered stretches follow at residues Lys-365–Thr-390, Glu-405–Asn-444, and Arg-455–Thr-474. Polar residues-rich tracts occupy residues Arg-422–Ser-439 and Ala-459–Thr-474. Position 489 is a phosphoserine (Ser-489). Positions Ile-535–Leu-560 are disordered. The segment covering Gln-550 to Leu-560 has biased composition (basic and acidic residues).

This sequence belongs to the INCENP family. Component of the CPC complex at least composed of IPL1, BIR1 and SLI15. Phosphorylated by serine/threonine protein kinase IPL1.

The protein resides in the nucleus. Its subcellular location is the cytoplasm. It localises to the cytoskeleton. It is found in the spindle. The protein localises to the chromosome. The protein resides in the centromere. Its subcellular location is the kinetochore. In terms of biological role, component of the chromosomal passenger complex (CPC), a complex that acts as a key regulator of mitosis. Stimulates IPL1 kinase activity and facilitates its association with the mitotic spindle. Has a role in attaching the kinetochores to the microtubules and ensuring that sister kinetochores connect to opposite poles. The chain is Inner centromere protein SLI15 (SLI15) from Saccharomyces cerevisiae (strain ATCC 204508 / S288c) (Baker's yeast).